The primary structure comprises 135 residues: NNCPPDWLPMNGLCYKIFDELKAWEDAERFCRKYKPGCHLASFHQYGESLEIAEYISDYHKGQAEVWIGLWDKKKDFSWEWTDRSCTDYLTWDKNQPDHYQNKEFCVELVSLTGYRLWNDQVCGSKNAFLCQCKF.

Intrachain disulfides connect C3-C14, C31-C131, C38-C133, and C106-C123. A C-type lectin domain is found at 10–132 (MNGLCYKIFD…CGSKNAFLCQ (123 aa)). Positions 96, 98, 104, 119, and 120 each coordinate Ca(2+). The Galactose-binding motif lies at 96 to 98 (QPD).

It belongs to the true venom lectin family. As to quaternary structure, homodimer; disulfide-linked. In terms of tissue distribution, expressed by the venom gland.

Its subcellular location is the secreted. Its function is as follows. Galactose-binding lectin which recognizes specific carbohydrate structures and agglutinates a variety of animal cells by binding to cell-surface glycoproteins and glycolipids. This is a calcium-dependent lectin. Shows high hemagglutinating activity (MHC is 0.25 ug/ml on rabbit erythrocytes). The sequence is that of C-type lectin PAL from Bitis arietans (African puff adder).